Here is a 39-residue protein sequence, read N- to C-terminus: Cytochrome b559 subunit beta (39 aa).

Residues W14 to S30 traverse the membrane as a helical segment. Residue H18 coordinates heme.

Belongs to the PsbE/PsbF family. As to quaternary structure, heterodimer of an alpha subunit and a beta subunit. PSII is composed of 1 copy each of membrane proteins PsbA, PsbB, PsbC, PsbD, PsbE, PsbF, PsbH, PsbI, PsbJ, PsbK, PsbL, PsbM, PsbT, PsbX, PsbY, PsbZ, Psb30/Ycf12, at least 3 peripheral proteins of the oxygen-evolving complex and a large number of cofactors. It forms dimeric complexes. It depends on heme b as a cofactor.

Its subcellular location is the plastid. The protein localises to the chloroplast thylakoid membrane. Functionally, this b-type cytochrome is tightly associated with the reaction center of photosystem II (PSII). PSII is a light-driven water:plastoquinone oxidoreductase that uses light energy to abstract electrons from H(2)O, generating O(2) and a proton gradient subsequently used for ATP formation. It consists of a core antenna complex that captures photons, and an electron transfer chain that converts photonic excitation into a charge separation. This chain is Cytochrome b559 subunit beta, found in Adiantum capillus-veneris (Maidenhair fern).